A 760-amino-acid chain; its full sequence is MAESKCPFKSQGSRSNVAGGGTRNTDWWPEQLKLNILRQHTTVTNPLGADFDYAAAFNTLDYDALKKDLTALMTDSQEWWPADFGHYGGLFIRMAWHSAGTYRVFDGRGGAGQGQQRFAPLNSWPDNVSLDKARRLLWPIKQKYGDKISWADLMILTGNVALESMGFKTFGFAGGRADTWEADESAYWGRETTWLGNDARYEKGFSGSDKQGTVIADEASHKTTHSRELENPLAAAHMGLIYVNPEGPDGNPDPVAAAHDIRVTFGRMAMNDEETVALIAGGHTFGKTHGAAPADNVGKEPEAAGLEAQGLGWQNSHGSGKGPDTITSGLEVTWTKTPTKWSNQFLEYLFKFDWELTKSPAGAHQWVAKNADDIIPDAYDAFKKHKPTMLTTDLSLRFDPAYEKISRRFLENPDQFADAFARAWFKLTHRDMGPRARYLGPEVPGEVLLWQDPIPAVNHALIDTVDTAALKRDVLATGVNPSKFISTAWAAASTFRGSDKRGGANGARIRFAPQRSWEVNNQPWLQESLSALEGVQSRFNASRPDRKQVSLADLIVLAGCAAVEQAAHDAGFPVRVPFTPGRMDASQDETDVESFSHMEPIADGFRNYAKPYVHGRAEHYLVDKAQLLNLSAPEMTVLVGGLRVLNTNYDGSAHGVFTSRPGVLSNDFFVNLLDMNTAWQAGHNGEIFEGADRKSGAKKWTATRADLVFGSHAELRAVAEVYASADGQRKFVNDFVAAWNKVMNLDRFDLQGKQFIYPRL.

The tract at residues 1 to 24 (MAESKCPFKSQGSRSNVAGGGTRN) is disordered. The tryptophyl-tyrosyl-methioninium (Trp-Tyr) (with M-268) cross-link spans 96 to 242 (WHSAGTYRVF…LAAAHMGLIY (147 aa)). H97 serves as the catalytic Proton acceptor. Positions 242–268 (YVNPEGPDGNPDPVAAAHDIRVTFGRM) form a cross-link, tryptophyl-tyrosyl-methioninium (Tyr-Met) (with W-96). H283 serves as a coordination point for heme b.

It belongs to the peroxidase family. Peroxidase/catalase subfamily. Homodimer or homotetramer. Requires heme b as cofactor. In terms of processing, formation of the three residue Trp-Tyr-Met cross-link is important for the catalase, but not the peroxidase activity of the enzyme.

It localises to the cytoplasm. The catalysed reaction is H2O2 + AH2 = A + 2 H2O. The enzyme catalyses 2 H2O2 = O2 + 2 H2O. In terms of biological role, bifunctional enzyme with both catalase and broad-spectrum peroxidase activity. The sequence is that of Catalase-peroxidase from Aspergillus clavatus (strain ATCC 1007 / CBS 513.65 / DSM 816 / NCTC 3887 / NRRL 1 / QM 1276 / 107).